Consider the following 1170-residue polypeptide: RNA-binding protein 33 (1170 aa).

2 disordered regions span residues 1 to 152 (MAAA…EGHE) and 199 to 221 (KDIK…LRFK). Ala2 is subject to N-acetylalanine. Basic and acidic residues predominate over residues 20–36 (QFDKPGAERSWRRRAAD). Residues 37-49 (EDWDSELEDDLLG) show a composition bias toward acidic residues. At Ser41 the chain carries Phosphoserine. Polar residues predominate over residues 82-108 (FSSQGVTISLNATSGMVTSFELSDNTN). Acidic residues-rich tracts occupy residues 112 to 126 (GEQE…GEDE) and 203 to 214 (EESDEEEEDDEE). Residues Ser205 and Ser233 each carry the phosphoserine modification. 4 disordered regions span residues 259-708 (FEER…NSNL), 721-784 (MSSS…PDED), 833-863 (QLYA…PFPG), and 942-1050 (AVPQ…VPPG). The span at 267–278 (KQGRYSSRRGGR) shows a compositional bias: basic residues. Basic and acidic residues predominate over residues 289-306 (GDQRRESTERGRMKDHRP). Positions 311 to 329 (TQPPVVPQAPPPPPPPPQQ) are enriched in pro residues. Composition is skewed to low complexity over residues 335–348 (LFQP…LPVQ), 357–372 (QGMH…RMMM), and 394–403 (TVVTPVQVPL). Positions 419–433 (FPGPPEFPQHTPGPV) are enriched in pro residues. Position 470 is an asymmetric dimethylarginine (Arg470). Composition is skewed to pro residues over residues 481–490 (SPPPPPPPPT), 554–568 (FIPP…PGQP), and 582–630 (LHPP…PQHP). Over residues 632 to 642 (QHQHHHHHHHL) the composition is skewed to basic residues. 2 stretches are compositionally biased toward polar residues: residues 662-708 (QTAQ…NSNL) and 721-732 (MSSSRCSATPSA). Phosphoserine is present on residues Ser741 and Ser765. The stretch at 789 to 835 (LYRLKIEEQKRLREEILKQKELRRQQQAGARKKELLERLAQQQQQLY) forms a coiled coil. Ser951 is subject to Phosphoserine. Lys960 is covalently cross-linked (Glycyl lysine isopeptide (Lys-Gly) (interchain with G-Cter in SUMO2)). Residues Ser973 and Ser991 each carry the phosphoserine modification. Arg1028 carries the post-translational modification Asymmetric dimethylarginine; alternate. An Omega-N-methylarginine; alternate modification is found at Arg1028. Residues 1098–1170 (CVVSVEGLSS…SHINVALIVE (73 aa)) enclose the RRM domain.

In terms of assembly, associates with the NXF1-NXT1 RNA export complex. Interacts with ALKBH5; facilitating ALKBH5 recruitment to m6A-containing transcripts. Interacts with SENP1; promoting ALKBH5 deSUMOylation and subsequent activation.

It is found in the nucleus. The protein localises to the cytoplasm. RNA reader protein, which recognizes and binds specific RNAs, thereby regulating RNA metabolic processes, such as mRNA export, mRNA stability and/or translation. Binds a subset of intronless RNAs containing GC-rich elements, such as NORAD, and promotes their nuclear export by recruiting target RNAs to components of the NXF1-NXT1 RNA export machinery. Specifically recognizes and binds N6-methyladenosine (m6A)-containing mRNAs, promoting their demethylation by ALKBH5. Acts as an molecular adapter, which (1) promotes ALKBH5 recruitment to m6A-containing transcripts and (2) activates ALKBH5 demethylase activity by recruiting SENP1, leading to ALKBH5 deSUMOylation and subsequent activation. The chain is RNA-binding protein 33 from Homo sapiens (Human).